A 476-amino-acid chain; its full sequence is Bifunctional protein HldE (476 aa).

Positions 1 to 319 are ribokinase; sequence MKVSLPAFEK…RALSVNHGES (319 aa). ATP is bound at residue 195-198; sequence NMGE. The active site involves D264. The interval 345 to 476 is cytidylyltransferase; sequence MTNGCFDILH…SIIENIMANQ (132 aa).

In the N-terminal section; belongs to the carbohydrate kinase PfkB family. This sequence in the C-terminal section; belongs to the cytidylyltransferase family. Homodimer.

It carries out the reaction D-glycero-beta-D-manno-heptose 7-phosphate + ATP = D-glycero-beta-D-manno-heptose 1,7-bisphosphate + ADP + H(+). The enzyme catalyses D-glycero-beta-D-manno-heptose 1-phosphate + ATP + H(+) = ADP-D-glycero-beta-D-manno-heptose + diphosphate. Its pathway is nucleotide-sugar biosynthesis; ADP-L-glycero-beta-D-manno-heptose biosynthesis; ADP-L-glycero-beta-D-manno-heptose from D-glycero-beta-D-manno-heptose 7-phosphate: step 1/4. It participates in nucleotide-sugar biosynthesis; ADP-L-glycero-beta-D-manno-heptose biosynthesis; ADP-L-glycero-beta-D-manno-heptose from D-glycero-beta-D-manno-heptose 7-phosphate: step 3/4. Catalyzes the phosphorylation of D-glycero-D-manno-heptose 7-phosphate at the C-1 position to selectively form D-glycero-beta-D-manno-heptose-1,7-bisphosphate. Functionally, catalyzes the ADP transfer from ATP to D-glycero-beta-D-manno-heptose 1-phosphate, yielding ADP-D-glycero-beta-D-manno-heptose. This is Bifunctional protein HldE from Shewanella sediminis (strain HAW-EB3).